The primary structure comprises 268 residues: MSSSKFEEVINKIINDSPPGELREVYDDLIKITSENSKNTILDAIENYNVQNCIPIEVNGNSVIISKYNKEGAKFFDPVNSVIFSVNHLERKGLDIEPYEFTHAKIEKGQLKELHDKLHEYLLQSFPGDVSFAVYPVPEEISKISIIIVSTKYNPNNFWNGHWRSSYIYDLETRELSGQISTQVHYYEDGNVSFQSGKDINQSNVDDVVCTIRDIETNFENDLDLSFFDLNEKQFKALRRRLPVTRSKINWGSAIGSYRLGKNAAEGK.

Ser2 is modified (N-acetylserine). Position 17 is a phosphoserine (Ser17).

The protein belongs to the F-actin-capping protein alpha subunit family. As to quaternary structure, component of the F-actin capping complex, composed of a heterodimer of an alpha and a beta subunit. Interacts with BSP1 (via C-terminus); leading to recruitment of the F-actin capping complex to actin cortical patches and the acomyosin contractile ring.

Its subcellular location is the cytoplasm. It is found in the cytoskeleton. It localises to the actin patch. In terms of biological role, F-actin-capping proteins bind in a Ca(2+)-independent manner to the fast growing ends of actin filaments (barbed end) thereby blocking the exchange of subunits at these ends. Unlike other capping proteins (such as gelsolin and severin), these proteins do not sever actin filaments. The chain is F-actin-capping protein subunit alpha (CAP1) from Saccharomyces cerevisiae (strain ATCC 204508 / S288c) (Baker's yeast).